A 280-amino-acid chain; its full sequence is Ataxin-3 homolog (280 aa).

The Josephin domain maps to 7-187; the sequence is GGMLYHEVQE…QECPMSSSSE (181 aa). The Nucleophile role is filled by Cys-20. The Proton acceptor role is filled by His-126. Residue Asp-141 is part of the active site. 2 stretches are compositionally biased toward polar residues: residues 183–194 and 221–232; these read SSSSEASNSFGQ and DNVNQQRRNQAL. Positions 183 to 240 are disordered; the sequence is SSSSEASNSFGQWLSPEDAERIRKNTSSGSSARNKRSNDNVNQQRRNQALSREEVQAF. The UIM domain occupies 243–262; sequence MEDDDLKAAIAASLLDASAA.

It localises to the nucleus. The catalysed reaction is Thiol-dependent hydrolysis of ester, thioester, amide, peptide and isopeptide bonds formed by the C-terminal Gly of ubiquitin (a 76-residue protein attached to proteins as an intracellular targeting signal).. Its function is as follows. Interacts with key regulators of transcription and represses transcription. Acts as a histone-binding protein that regulates transcription. Acts as a deubiquitinating enzyme. This chain is Ataxin-3 homolog, found in Arabidopsis thaliana (Mouse-ear cress).